Consider the following 215-residue polypeptide: Hibernation-associated plasma protein HP-27 (215 aa).

A signal peptide spans 1-30 (MYEAGKRASFMGGAGIWILALSVLMHVVCS). Residues 34 to 79 (GNPESCNVPGPQGPPGMRGPPGTPGKPGPPGWNGFPGLPGPPGPPG) are disordered. The 39-residue stretch at 43–81 (GPQGPPGMRGPPGTPGKPGPPGWNGFPGLPGPPGPPGMT) folds into the Collagen-like domain. Residues 44-63 (PQGPPGMRGPPGTPGKPGPP) show a composition bias toward pro residues. The 131-residue stretch at 85–215 (HSKGTSAFAV…VFSGFLIHEN (131 aa)) folds into the C1q domain. N-linked (GlcNAc...) asparagine glycosylation is present at asparagine 155.

As to expression, plasma; synthesized in the liver.

It is found in the secreted. Functionally, plasma proteins HP-20, HP-25, HP-27 and HP-55 form a 140 kDa complex via disulfide bonds in the plasma and are hibernation specific. This is Hibernation-associated plasma protein HP-27 from Tamias sibiricus (Siberian chipmunk).